A 110-amino-acid chain; its full sequence is Insulin (110 aa).

An N-terminal signal peptide occupies residues M1–A24. Intrachain disulfides connect C31/C96, C43/C109, and C95/C100. The propeptide at E57–Q87 is c peptide.

Belongs to the insulin family. Heterodimer of a B chain and an A chain linked by two disulfide bonds.

The protein resides in the secreted. In terms of biological role, insulin decreases blood glucose concentration. It increases cell permeability to monosaccharides, amino acids and fatty acids. It accelerates glycolysis, the pentose phosphate cycle, and glycogen synthesis in liver. This chain is Insulin (INS), found in Canis lupus familiaris (Dog).